Here is a 410-residue protein sequence, read N- to C-terminus: Protein TIC 214 (410 aa).

6 helical membrane-spanning segments follow: residues 22–42 (FVFG…GSFI), 61–81 (GSAI…IGVI), 87–107 (LEPS…IGFL), 131–151 (AVIV…ITSI), 161–181 (LFLF…GFLI), and 210–230 (LALC…YIGL).

It belongs to the TIC214 family. Part of the Tic complex.

The protein localises to the plastid. Its subcellular location is the chloroplast inner membrane. In terms of biological role, involved in protein precursor import into chloroplasts. May be part of an intermediate translocation complex acting as a protein-conducting channel at the inner envelope. The protein is Protein TIC 214 of Mesostigma viride (Green alga).